The primary structure comprises 622 residues: Deoxynucleoside triphosphate triphosphohydrolase SAMHD1 (622 aa).

One can recognise an SAM domain in the interval 26-89; that stretch reads WDVEDTVAYL…LHCLQKLSQI (64 aa). Residues Lys-95 and Val-96 each contribute to the GTP site. Asn-98 is a dGTP binding site. The GTP site is built by Asp-116, Gln-121, and Arg-124. The dGTP site is built by Gln-128, Leu-129, Val-135, and Arg-143. Gln-128 is a binding site for dATP. Position 128 (Gln-128) interacts with dCTP. Gln-128 contacts dTTP. Arg-143 is a binding site for dATP. Arg-143 is a binding site for dCTP. Position 143 (Arg-143) interacts with dTTP. The region spanning 143 to 296 is the HD domain; that stretch reads RFEHSIGVGY…GIDVDKWDYF (154 aa). Mn(2+) contacts are provided by His-146, His-185, and Asp-186. DATP is bound by residues His-189 and His-194. The dCTP site is built by His-189 and His-194. 2 residues coordinate dTTP: His-189 and His-194. His-212 is an active-site residue. Asp-291 is a binding site for Mn(2+). Positions 292, 295, 299, 313, 332, 334, 338, 346, 354, 355, 356, and 357 each coordinate dGTP. DATP contacts are provided by Lys-292, Tyr-295, and Asp-299. Residues Lys-292, Tyr-295, and Asp-299 each contribute to the dCTP site. DTTP contacts are provided by Lys-292, Tyr-295, and Asp-299. Arg-346 provides a ligand contact to dATP. A dCTP-binding site is contributed by Arg-346. A dATP-binding site is contributed by Gln-355. Gln-355 is a binding site for dCTP. Gln-355 serves as a coordination point for dTTP. Residues Arg-431, Lys-435, and Lys-502 each contribute to the GTP site. Lys-502 lines the dGTP pocket. A disordered region spans residues 571–622; the sequence is TPLKQDWHAREDEDEEEEEKHRQNQTLPHHTPQRTGRNVKVDLFQARGETKL. The segment covering 594–606 has biased composition (polar residues); the sequence is NQTLPHHTPQRTG.

This sequence belongs to the SAMHD1 family. In terms of assembly, homodimer; in absence of GTP and dNTP. Homotetramer; in GTP- and dNTP-bound form. Interacts with rbbp8/CtIP. The cofactor is Zn(2+).

The protein localises to the nucleus. Its subcellular location is the chromosome. The enzyme catalyses a 2'-deoxyribonucleoside 5'-triphosphate + H2O = a 2'-deoxyribonucleoside + triphosphate + H(+). It catalyses the reaction dATP + H2O = 2'-deoxyadenosine + triphosphate + H(+). The catalysed reaction is dCTP + H2O = 2'-deoxycytidine + triphosphate + H(+). It carries out the reaction dGTP + H2O = 2'-deoxyguanosine + triphosphate + H(+). The enzyme catalyses dTTP + H2O = thymidine + triphosphate + H(+). With respect to regulation, allosterically activated and regulated via the combined actions of GTP and dNTPs (dATP, dGTP, dTTP and dCTP): Allosteric site 1 binds GTP, while allosteric site 2 binds dNTP. Allosteric activation promotes the formation of highly active homotetramers. Functionally, protein that acts both as a host restriction factor involved in defense response to virus and as a regulator of DNA end resection at stalled replication forks. Has deoxynucleoside triphosphate (dNTPase) activity, which is required to restrict infection by viruses: dNTPase activity reduces cellular dNTP levels to levels too low for retroviral reverse transcription to occur, blocking early-stage virus replication in dendritic and other myeloid cells. Functions during S phase at stalled DNA replication forks to promote the resection of gapped or reversed forks: acts by stimulating the exonuclease activity of MRE11, activating the ATR-CHK1 pathway and allowing the forks to restart replication. Its ability to promote degradation of nascent DNA at stalled replication forks is required to prevent induction of type I interferons, thereby preventing chronic inflammation. Ability to promote DNA end resection at stalled replication forks is independent of dNTPase activity. This chain is Deoxynucleoside triphosphate triphosphohydrolase SAMHD1, found in Danio rerio (Zebrafish).